Consider the following 142-residue polypeptide: SPbeta prophage-derived deoxyuridine 5'-triphosphate nucleotidohydrolase YosS (142 aa).

Positions 62 and 74 each coordinate dUMP. The Proton acceptor role is filled by Asp80. DUMP is bound by residues Tyr83 and Phe91.

Belongs to the dUTPase family. In terms of assembly, homotrimer. Mg(2+) is required as a cofactor.

It carries out the reaction dUTP + H2O = dUMP + diphosphate + H(+). It functions in the pathway pyrimidine metabolism; dUMP biosynthesis; dUMP from dCTP (dUTP route): step 2/2. In terms of biological role, involved in nucleotide metabolism: produces dUMP, the immediate precursor of thymidine nucleotides and decreases the intracellular concentration of dUTP, so that uracil cannot be incorporated into DNA. The Ser-62 side chain changes its position upon ligand-binding to make contacts with the nucleotide phosphates. The protein is SPbeta prophage-derived deoxyuridine 5'-triphosphate nucleotidohydrolase YosS of Bacillus subtilis (strain 168).